A 316-amino-acid chain; its full sequence is MTNDFHHITVLLHETIDMLDIKPDGIYVDATLGGAGHSECLLSKLGKEGHLYCFDQDQKAIDNAKIRLQQYVKTGQVSFIKDNFRHLKSRLADEGIYEIDGICYDLGVSSPQLDERERGFSYKKDAPLDMRMNQDAQLTAFDVVNTYDYRDLVRLFFKYGEDKFSKQIARKIESARKEKLIETTAELAEIIKSAKPAKELKKKGHPAKQIFQAIRIEVNDELGAAEESLTQALDLLALNGRIAVITFHSLEDRLTKQLFKEVTTLDVPKGLPFVPENLQPKFSLVNRKPILPNARELSENNRAHSAKLRVIQKIRN.

Residues 35–37 (AGH), Asp-55, Phe-84, Asp-105, and Gln-112 each bind S-adenosyl-L-methionine.

This sequence belongs to the methyltransferase superfamily. RsmH family.

It is found in the cytoplasm. The enzyme catalyses cytidine(1402) in 16S rRNA + S-adenosyl-L-methionine = N(4)-methylcytidine(1402) in 16S rRNA + S-adenosyl-L-homocysteine + H(+). Its function is as follows. Specifically methylates the N4 position of cytidine in position 1402 (C1402) of 16S rRNA. In Streptococcus mutans serotype c (strain ATCC 700610 / UA159), this protein is Ribosomal RNA small subunit methyltransferase H.